The chain runs to 89 residues: Small ribosomal subunit protein uS15 (89 aa).

Belongs to the universal ribosomal protein uS15 family. In terms of assembly, part of the 30S ribosomal subunit. Forms a bridge to the 50S subunit in the 70S ribosome, contacting the 23S rRNA.

One of the primary rRNA binding proteins, it binds directly to 16S rRNA where it helps nucleate assembly of the platform of the 30S subunit by binding and bridging several RNA helices of the 16S rRNA. In terms of biological role, forms an intersubunit bridge (bridge B4) with the 23S rRNA of the 50S subunit in the ribosome. This chain is Small ribosomal subunit protein uS15, found in Alcanivorax borkumensis (strain ATCC 700651 / DSM 11573 / NCIMB 13689 / SK2).